The sequence spans 217 residues: MVQDLEQKLWSIASGIPFSSDYFLQASPIRKLKKENLFSKVFETYFLELGSGWGEVAISMALQRPNTGFILMEKKFDRIRHTIREIEKHSLDNVKILCVNFNWFLEEVFEENLFSEILLNFPDPWPKKRHHKKRTVNSKFLESLKILLPEKGKFYFATDYGPYARKIIRLFRDSKAFSPEKVELKSERNEIPVSHFERKKREEGKRIYYIDRVLVQK.

Positions 48, 73, 100, and 123 each coordinate S-adenosyl-L-methionine. Asp-123 is a catalytic residue. Positions 127 and 159 each coordinate substrate.

It belongs to the class I-like SAM-binding methyltransferase superfamily. TrmB family.

It carries out the reaction guanosine(46) in tRNA + S-adenosyl-L-methionine = N(7)-methylguanosine(46) in tRNA + S-adenosyl-L-homocysteine. The protein operates within tRNA modification; N(7)-methylguanine-tRNA biosynthesis. In terms of biological role, catalyzes the formation of N(7)-methylguanine at position 46 (m7G46) in tRNA. The chain is tRNA (guanine-N(7)-)-methyltransferase from Leptospira interrogans serogroup Icterohaemorrhagiae serovar copenhageni (strain Fiocruz L1-130).